The chain runs to 396 residues: Phosphopentomutase (396 aa).

Positions 14, 286, 291, 327, 328, and 339 each coordinate Mn(2+).

This sequence belongs to the phosphopentomutase family. It depends on Mn(2+) as a cofactor.

It is found in the cytoplasm. It carries out the reaction 2-deoxy-alpha-D-ribose 1-phosphate = 2-deoxy-D-ribose 5-phosphate. The catalysed reaction is alpha-D-ribose 1-phosphate = D-ribose 5-phosphate. Its pathway is carbohydrate degradation; 2-deoxy-D-ribose 1-phosphate degradation; D-glyceraldehyde 3-phosphate and acetaldehyde from 2-deoxy-alpha-D-ribose 1-phosphate: step 1/2. Functionally, isomerase that catalyzes the conversion of deoxy-ribose 1-phosphate (dRib-1-P) and ribose 1-phosphate (Rib-1-P) to deoxy-ribose 5-phosphate (dRib-5-P) and ribose 5-phosphate (Rib-5-P), respectively. This is Phosphopentomutase from Staphylococcus epidermidis (strain ATCC 35984 / DSM 28319 / BCRC 17069 / CCUG 31568 / BM 3577 / RP62A).